A 276-amino-acid chain; its full sequence is S-adenosylmethionine decarboxylase proenzyme (276 aa).

Serine 124 acts as the Schiff-base intermediate with substrate; via pyruvic acid in catalysis. The residue at position 124 (serine 124) is a Pyruvic acid (Ser); by autocatalysis. Histidine 129 acts as the Proton acceptor; for processing activity in catalysis. The active-site Proton donor; for catalytic activity is cysteine 152.

It belongs to the prokaryotic AdoMetDC family. Type 2 subfamily. As to quaternary structure, heterooctamer of four alpha and four beta chains arranged as a tetramer of alpha/beta heterodimers. It depends on pyruvate as a cofactor. Is synthesized initially as an inactive proenzyme. Formation of the active enzyme involves a self-maturation process in which the active site pyruvoyl group is generated from an internal serine residue via an autocatalytic post-translational modification. Two non-identical subunits are generated from the proenzyme in this reaction, and the pyruvate is formed at the N-terminus of the alpha chain, which is derived from the carboxyl end of the proenzyme. The post-translation cleavage follows an unusual pathway, termed non-hydrolytic serinolysis, in which the side chain hydroxyl group of the serine supplies its oxygen atom to form the C-terminus of the beta chain, while the remainder of the serine residue undergoes an oxidative deamination to produce ammonia and the pyruvoyl group blocking the N-terminus of the alpha chain.

The enzyme catalyses S-adenosyl-L-methionine + H(+) = S-adenosyl 3-(methylsulfanyl)propylamine + CO2. Its pathway is amine and polyamine biosynthesis; S-adenosylmethioninamine biosynthesis; S-adenosylmethioninamine from S-adenosyl-L-methionine: step 1/1. Catalyzes the decarboxylation of S-adenosylmethionine to S-adenosylmethioninamine (dcAdoMet), the propylamine donor required for the synthesis of the polyamines spermine and spermidine from the diamine putrescine. This chain is S-adenosylmethionine decarboxylase proenzyme, found in Desulfitobacterium hafniense (strain Y51).